Reading from the N-terminus, the 242-residue chain is ATP synthase subunit a (242 aa).

A run of 6 helical transmembrane segments spans residues S29–S49, F84–I104, I114–V134, F140–I160, V189–M209, and V210–L230.

Belongs to the ATPase A chain family. F-type ATPases have 2 components, CF(1) - the catalytic core - and CF(0) - the membrane proton channel. CF(1) has five subunits: alpha(3), beta(3), gamma(1), delta(1), epsilon(1). CF(0) has three main subunits: a(1), b(2) and c(9-12). The alpha and beta chains form an alternating ring which encloses part of the gamma chain. CF(1) is attached to CF(0) by a central stalk formed by the gamma and epsilon chains, while a peripheral stalk is formed by the delta and b chains.

It is found in the cell inner membrane. Its function is as follows. Key component of the proton channel; it plays a direct role in the translocation of protons across the membrane. The protein is ATP synthase subunit a of Rickettsia bellii (strain RML369-C).